A 206-amino-acid polypeptide reads, in one-letter code: LexA repressor (206 aa).

Residues 28–48 (VREIGEAVGLASSSTVHGHLD) constitute a DNA-binding region (H-T-H motif). Catalysis depends on for autocatalytic cleavage activity residues Ser-128 and Lys-166.

The protein belongs to the peptidase S24 family. Homodimer.

It catalyses the reaction Hydrolysis of Ala-|-Gly bond in repressor LexA.. Represses a number of genes involved in the response to DNA damage (SOS response), including recA and lexA. In the presence of single-stranded DNA, RecA interacts with LexA causing an autocatalytic cleavage which disrupts the DNA-binding part of LexA, leading to derepression of the SOS regulon and eventually DNA repair. This chain is LexA repressor, found in Exiguobacterium sp. (strain ATCC BAA-1283 / AT1b).